Reading from the N-terminus, the 324-residue chain is Olfactory receptor 5A2 (324 aa).

Over 1–26 (MAVGRNNTIVTKFILLGLSDHPQMKI) the chain is Extracellular. N6 is a glycosylation site (N-linked (GlcNAc...) asparagine). A helical transmembrane segment spans residues 27–47 (FLFMLFLGLYLLTLAWNLSLI). The Cytoplasmic segment spans residues 48-55 (ALIKMDSH). Residues 56 to 76 (LHMPMYFFLSNLSFLDICYVS) traverse the membrane as a helical segment. Residues 77-100 (STAPKMLSDIITEQKTISFVGCAT) lie on the Extracellular side of the membrane. The cysteines at positions 98 and 190 are disulfide-linked. A helical transmembrane segment spans residues 101–121 (QYFVFCGMGLTECFLLAAMAY). Over 122 to 134 (DRYAAICNPLLYT) the chain is Cytoplasmic. The helical transmembrane segment at 135 to 155 (VLISHTLCLKMVVGAYVGGFL) threads the bilayer. Over 156–197 (SSFIETYSVYQHDFCGPYMINHFFCDLPPVLALSCSDTFTSE) the chain is Extracellular. The helical transmembrane segment at 198–218 (VVTFIVSVVVGIVSVLVVLIS) threads the bilayer. Residues 219–238 (YGYIVAAVVKISSATGRTKA) lie on the Cytoplasmic side of the membrane. The helical transmembrane segment at 239 to 259 (FSTCASHLTAVTLFYGSGFFM) threads the bilayer. Residues 260 to 272 (YMRPSSSYSLNRD) lie on the Extracellular side of the membrane. The chain crosses the membrane as a helical span at residues 273–293 (KVVSIFYALVIPVVNPIIYSF). At 294–324 (RNKEIKNAMRKAMERDPGISHGGPFIFMTLG) the chain is on the cytoplasmic side.

It belongs to the G-protein coupled receptor 1 family.

Its subcellular location is the cell membrane. Functionally, odorant receptor. This Homo sapiens (Human) protein is Olfactory receptor 5A2 (OR5A2).